We begin with the raw amino-acid sequence, 164 residues long: Peptidyl-prolyl cis-trans isomerase A (164 aa).

N-acetylmethionine is present on methionine 1. Valine 2 is modified (N-acetylvaline; in Peptidyl-prolyl cis-trans isomerase A, N-terminally processed). One can recognise a PPIase cyclophilin-type domain in the interval 7–163; the sequence is FFDIAVDGEP…KKITIADCGQ (157 aa). At lysine 28 the chain carries N6-acetyllysine; alternate. Lysine 28 participates in a covalent cross-link: Glycyl lysine isopeptide (Lys-Gly) (interchain with G-Cter in SUMO2); alternate. A Glycyl lysine isopeptide (Lys-Gly) (interchain with G-Cter in ubiquitin); alternate cross-link involves residue lysine 28. Residues lysine 44 and lysine 76 each carry the N6-acetyllysine modification. Serine 77 carries the phosphoserine modification. Lysine 82 bears the N6-acetyllysine; alternate mark. Lysine 82 participates in a covalent cross-link: Glycyl lysine isopeptide (Lys-Gly) (interchain with G-Cter in SUMO2); alternate. At threonine 93 the chain carries Phosphothreonine. Asparagine 108 carries N-linked (GlcNAc...) asparagine glycosylation. 3 positions are modified to N6-acetyllysine: lysine 125, lysine 131, and lysine 133.

This sequence belongs to the cyclophilin-type PPIase family. PPIase A subfamily. Interacts with protein phosphatase PPP3CA/calcineurin A. Interacts with isoform 2 of BSG/CD147. Interacts with FOXO1; the interaction promotes FOXO1 dephosphorylation, nuclear accumulation and transcriptional activity. Interacts with integrin ITGA2B:ITGB3; the interaction is ROS and peptidyl-prolyl cis-trans isomerase (PPIase) activity-dependent and is increased in the presence of thrombin. Interacts with MAP3K5. Interacts with TARDBP; the interaction is dependent on the RNA-binding activity of TARDBP and the PPIase activity of PPIA/CYPA and the acetylation of PPIA/CYPA at Lys-125 favors the interaction. Interacts with HNRNPA1, HNRNPA2B1, HNRNPC, RBMX, HNRNPK and HNRNPM. Acetylation at Lys-125 markedly inhibits catalysis of cis to trans isomerization. PPIA acetylation also antagonizes the immunosuppressive effects of cyclosporine by inhibiting the sequential steps of cyclosporine binding and calcineurin inhibition. Acetylation at Lys-125 favors the interaction with TARDBP.

It localises to the cytoplasm. The protein resides in the secreted. The protein localises to the nucleus. The enzyme catalyses [protein]-peptidylproline (omega=180) = [protein]-peptidylproline (omega=0). With respect to regulation, binds cyclosporin A (CsA). CsA mediates some of its effects via an inhibitory action on PPIase. Its function is as follows. Catalyzes the cis-trans isomerization of proline imidic peptide bonds in oligopeptides. Exerts a strong chemotactic effect on leukocytes partly through activation of one of its membrane receptors BSG/CD147, initiating a signaling cascade that culminates in MAPK/ERK activation. Activates endothelial cells (ECs) in a proinflammatory manner by stimulating activation of NF-kappa-B and ERK, JNK and p38 MAP-kinases and by inducing expression of adhesion molecules including SELE and VCAM1. Induces apoptosis in ECs by promoting the FOXO1-dependent expression of CCL2 and BCL2L11 which are involved in EC chemotaxis and apoptosis. In response to oxidative stress, initiates proapoptotic and antiapoptotic signaling in ECs via activation of NF-kappa-B and AKT1 and up-regulation of antiapoptotic protein BCL2. Negatively regulates MAP3K5/ASK1 kinase activity, autophosphorylation and oxidative stress-induced apoptosis mediated by MAP3K5/ASK1. Necessary for the assembly of TARDBP in heterogeneous nuclear ribonucleoprotein (hnRNP) complexes and regulates TARDBP binding to RNA UG repeats and TARDBP-dependent expression of HDAC6, ATG7 and VCP which are involved in clearance of protein aggregates. Plays an important role in platelet activation and aggregation. Regulates calcium mobilization and integrin ITGA2B:ITGB3 bidirectional signaling via increased ROS production as well as by facilitating the interaction between integrin and the cell cytoskeleton. Binds heparan sulfate glycosaminoglycans. This Saguinus oedipus (Cotton-top tamarin) protein is Peptidyl-prolyl cis-trans isomerase A (PPIA).